The primary structure comprises 394 residues: NAD(P)H-quinone oxidoreductase subunit H (394 aa).

The protein belongs to the complex I 49 kDa subunit family. NDH-1 can be composed of about 15 different subunits; different subcomplexes with different compositions have been identified which probably have different functions.

It is found in the cellular thylakoid membrane. It catalyses the reaction a plastoquinone + NADH + (n+1) H(+)(in) = a plastoquinol + NAD(+) + n H(+)(out). It carries out the reaction a plastoquinone + NADPH + (n+1) H(+)(in) = a plastoquinol + NADP(+) + n H(+)(out). Functionally, NDH-1 shuttles electrons from an unknown electron donor, via FMN and iron-sulfur (Fe-S) centers, to quinones in the respiratory and/or the photosynthetic chain. The immediate electron acceptor for the enzyme in this species is believed to be plastoquinone. Couples the redox reaction to proton translocation, and thus conserves the redox energy in a proton gradient. Cyanobacterial NDH-1 also plays a role in inorganic carbon-concentration. This Synechococcus sp. (strain CC9605) protein is NAD(P)H-quinone oxidoreductase subunit H.